We begin with the raw amino-acid sequence, 477 residues long: V-type proton ATPase subunit B (477 aa).

Arginine 365 is an ATP binding site.

This sequence belongs to the ATPase alpha/beta chains family. As to quaternary structure, V-ATPase is a heteromultimeric enzyme composed of a peripheral catalytic V1 complex (components A to H) attached to an integral membrane V0 proton pore complex (components: a, c, c', c'', d, e, f and VOA1).

Its subcellular location is the vacuole membrane. In terms of biological role, non-catalytic subunit of the V1 complex of vacuolar(H+)-ATPase (V-ATPase), a multisubunit enzyme composed of a peripheral complex (V1) that hydrolyzes ATP and a membrane integral complex (V0) that translocates protons. V-ATPase is responsible for acidifying and maintaining the pH of intracellular compartments. The chain is V-type proton ATPase subunit B from Encephalitozoon cuniculi (strain GB-M1) (Microsporidian parasite).